The sequence spans 213 residues: Thiopurine S-methyltransferase (213 aa).

Trp10, Leu45, Glu66, and Arg121 together coordinate S-adenosyl-L-methionine.

The protein belongs to the class I-like SAM-binding methyltransferase superfamily. TPMT family.

The protein resides in the cytoplasm. The catalysed reaction is S-adenosyl-L-methionine + a thiopurine = S-adenosyl-L-homocysteine + a thiopurine S-methylether.. In Aliivibrio fischeri (strain ATCC 700601 / ES114) (Vibrio fischeri), this protein is Thiopurine S-methyltransferase.